The primary structure comprises 503 residues: MPDVKESVPPKYPGDSEGRSCKPETSGPPQEDKSGSEDPPPFLSVTGLTETVNEVSKLSNKIGMNCDYYMEEKVLPPSSLEGKVKETVHNAFWDHLKEQLSATPPDFSCALELLKEIKEILLSLLLPRQNRLRIEIEEALDMDLLKQEAEHGALKVLYLSKYVLNMMALLCAPVRDEAVQKLENITDPVWLLRGIFQVLGRMKMDMVNYTIQSLQPHLQEHSIQYERAKFQELLNKQPSLLNHTTKWLTQAAGDLTMSPPTCPDTSDSSSVAGPSPNEAANNPEPLSPTMVLCQGFLNLLLWDLENEEFPETLLMDRTRLQELKSQLHQLTVMASVLLVASSFSGSVLFGSPQFVDKLKRITKSLLEDFHSRPEEAILTVSEQVSQEIHQSLKNMGLVALSSDNTASLMGQLQNIAKKENCVCSVIDQRIHLFLKCCLVLGVQRSLLDLPGGLTLIEAELAELGQKFVNLTHHNQQVFGPYYTEILKTLISPAQALETKVESV.

The segment covering 1-22 has biased composition (basic and acidic residues); it reads MPDVKESVPPKYPGDSEGRSCK. Disordered regions lie at residues 1-42 and 254-285; these read MPDV…PPPF and DLTMSPPTCPDTSDSSSVAGPSPNEAANNPEP. Over residues 263–285 the composition is skewed to low complexity; sequence PDTSDSSSVAGPSPNEAANNPEP. The chain crosses the membrane as a helical span at residues 330 to 349; that stretch reads LTVMASVLLVASSFSGSVLF.

This sequence belongs to the TCP11 family. Found in a complex at least composed of MROH2B, PRKACA isoform 2 and TCP11. Interacts with MROH2B. Interacts with PRKACA isoform 2. Isoform 2 and isoform 3 interact with ODF1 (via leucine zipper motif). In terms of processing, constitutively phosphorylated on serine, threonine and tyrosine residues within the head and tail regions of noncapacitated spermatozoa. Phosphorylation on tyrosine residues increases upon sperm capacitation within the acrosomal region in a protein kinase A (PKA)-dependent signaling pathway. In terms of tissue distribution, isoform 2 and isoform 3 are expressed in sperm. Isoform 1 is not detected in sperm (at protein level). Testis-specific. Isoform 1, isoform 2 and isoform 3 are expressed in sperm.

The protein resides in the membrane. Its subcellular location is the cell projection. It is found in the cilium. The protein localises to the flagellum. It localises to the cytoplasmic vesicle. The protein resides in the secretory vesicle. Its subcellular location is the acrosome. Its function is as follows. Plays a role in the process of sperm capacitation and acrosome reactions. Probable receptor for the putative fertilization-promoting peptide (FPP) at the sperm membrane that may modulate the activity of the adenylyl cyclase cAMP pathway. In Homo sapiens (Human), this protein is T-complex protein 11 homolog (TCP11).